A 231-amino-acid chain; its full sequence is Ribose-5-phosphate isomerase A (231 aa).

Substrate is bound by residues 28 to 31, 83 to 86, and 96 to 99; these read TGST, DGAD, and KGGG. Residue Glu105 is the Proton acceptor of the active site. Lys123 is a binding site for substrate.

This sequence belongs to the ribose 5-phosphate isomerase family. Homodimer.

It carries out the reaction aldehydo-D-ribose 5-phosphate = D-ribulose 5-phosphate. It participates in carbohydrate degradation; pentose phosphate pathway; D-ribose 5-phosphate from D-ribulose 5-phosphate (non-oxidative stage): step 1/1. In terms of biological role, catalyzes the reversible conversion of ribose-5-phosphate to ribulose 5-phosphate. This Sinorhizobium fredii (strain NBRC 101917 / NGR234) protein is Ribose-5-phosphate isomerase A.